The chain runs to 184 residues: Shikimate kinase (184 aa).

Residue 12–17 (GSGKST) participates in ATP binding. Ser-16 is a binding site for Mg(2+). Substrate contacts are provided by Asp-34, Arg-58, and Gly-80. Arg-117 is a binding site for ATP. A substrate-binding site is contributed by Arg-136. Arg-153 provides a ligand contact to ATP. The tract at residues 163 to 184 (MSRLDDPTPNTSPSSTASGAAT) is disordered. Residues 169 to 184 (PTPNTSPSSTASGAAT) are compositionally biased toward low complexity.

The protein belongs to the shikimate kinase family. As to quaternary structure, monomer. Requires Mg(2+) as cofactor.

It is found in the cytoplasm. The catalysed reaction is shikimate + ATP = 3-phosphoshikimate + ADP + H(+). It participates in metabolic intermediate biosynthesis; chorismate biosynthesis; chorismate from D-erythrose 4-phosphate and phosphoenolpyruvate: step 5/7. In terms of biological role, catalyzes the specific phosphorylation of the 3-hydroxyl group of shikimic acid using ATP as a cosubstrate. The polypeptide is Shikimate kinase (Mycobacterium marinum (strain ATCC BAA-535 / M)).